A 308-amino-acid chain; its full sequence is Coenzyme PQQ synthesis protein B (308 aa).

Belongs to the PqqB family.

It functions in the pathway cofactor biosynthesis; pyrroloquinoline quinone biosynthesis. In terms of biological role, may be involved in the transport of PQQ or its precursor to the periplasm. This Rhodopseudomonas palustris (strain BisB5) protein is Coenzyme PQQ synthesis protein B.